The following is a 559-amino-acid chain: Nuclear envelope integral membrane protein (559 aa).

An N-terminal signal peptide occupies residues Met-1 to Ala-15. 3 N-linked (GlcNAc...) asparagine glycosylation sites follow: Asn-67, Asn-81, and Asn-114. A run of 5 helical transmembrane segments spans residues Tyr-164–Trp-184, Ile-192–Trp-212, Ile-218–Met-238, Leu-267–Ile-287, and Ile-290–Trp-310. N-linked (GlcNAc...) asparagine glycosylation is found at Asn-408 and Asn-465. Disordered regions lie at residues Arg-475–Pro-494 and Lys-510–Glu-559. A compositionally biased stretch (polar residues) spans Pro-517–Thr-526. Residues Tyr-530–Ala-539 are compositionally biased toward basic and acidic residues.

It belongs to the NEMP family.

Its subcellular location is the nucleus inner membrane. In terms of biological role, contributes to nuclear envelope stiffness in germ cells. Required for fertility. The protein is Nuclear envelope integral membrane protein of Caenorhabditis elegans.